The primary structure comprises 69 residues: Ribosome modulation factor (69 aa).

It belongs to the ribosome modulation factor family.

The protein localises to the cytoplasm. Its function is as follows. During stationary phase, converts 70S ribosomes to an inactive dimeric form (100S ribosomes). This chain is Ribosome modulation factor, found in Marinomonas mediterranea (strain ATCC 700492 / JCM 21426 / NBRC 103028 / MMB-1).